The chain runs to 259 residues: Global transcriptional regulator CodY (259 aa).

Residues 1–155 (MELLAKTRKL…SSTVVGMEIL (155 aa)) form a GAF domain region. The H-T-H motif DNA-binding region spans 203–222 (ASKIADRVGITRSVIVNALR). Ser215 is subject to Phosphoserine.

This sequence belongs to the CodY family.

It is found in the cytoplasm. Its function is as follows. DNA-binding global transcriptional regulator which is involved in the adaptive response to starvation and acts by directly or indirectly controlling the expression of numerous genes in response to nutrient availability. During rapid exponential growth, CodY is highly active and represses genes whose products allow adaptation to nutrient depletion. This Bacillus anthracis (strain A0248) protein is Global transcriptional regulator CodY.